A 296-amino-acid polypeptide reads, in one-letter code: Probable AP endonuclease (296 aa).

C16 and C20 are disulfide-bonded. Zn(2+) contacts are provided by H78, H115, E142, H182, H218, D231, H233, and E271.

The protein belongs to the AP endonuclease 2 family. It depends on Zn(2+) as a cofactor.

It localises to the host nucleus. Its subcellular location is the host cytoplasm. The protein localises to the virion. Its function is as follows. Endonuclease that plays a role in DNA repair. Cleaves phosphodiester bonds on the 5' side of apurinic or apyrimidinic sites (AP sites). In addition to endonuclease activity, the ASFV enzyme has a proofreading 3'-5' exonuclease activity that is considerably more efficient in the elimination of a mismatch than in that of a correctly paired base. Displays 3'-phosphatase and 3'-repair diesterase activities. The single nucleotide gaps generated by the AP endonuclease are filled by the viral AP endonuclease and DNA ligase. The protein is Probable AP endonuclease of Ornithodoros (relapsing fever ticks).